Here is a 123-residue protein sequence, read N- to C-terminus: Ribosome-binding factor A (123 aa).

Belongs to the RbfA family. In terms of assembly, monomer. Binds 30S ribosomal subunits, but not 50S ribosomal subunits or 70S ribosomes.

It is found in the cytoplasm. One of several proteins that assist in the late maturation steps of the functional core of the 30S ribosomal subunit. Associates with free 30S ribosomal subunits (but not with 30S subunits that are part of 70S ribosomes or polysomes). Required for efficient processing of 16S rRNA. May interact with the 5'-terminal helix region of 16S rRNA. The polypeptide is Ribosome-binding factor A (Rickettsia bellii (strain OSU 85-389)).